The following is a 62-amino-acid chain: Large ribosomal subunit protein bL28 (62 aa).

Residues 1-28 (MARVCAITGRKARSGNSRSHAMNATKRK) form a disordered region.

The protein belongs to the bacterial ribosomal protein bL28 family.

The protein is Large ribosomal subunit protein bL28 of Bacillus cytotoxicus (strain DSM 22905 / CIP 110041 / 391-98 / NVH 391-98).